The following is a 516-amino-acid chain: 2,3-bisphosphoglycerate-independent phosphoglycerate mutase (516 aa).

Residues aspartate 14 and serine 64 each coordinate Mn(2+). The active-site Phosphoserine intermediate is the serine 64. Substrate-binding positions include histidine 125, 155–156 (RD), arginine 187, arginine 193, 263–266 (RPDR), and lysine 337. Residues aspartate 404, histidine 408, aspartate 445, histidine 446, and histidine 464 each coordinate Mn(2+).

Belongs to the BPG-independent phosphoglycerate mutase family. As to quaternary structure, monomer. Mn(2+) serves as cofactor.

It catalyses the reaction (2R)-2-phosphoglycerate = (2R)-3-phosphoglycerate. It functions in the pathway carbohydrate degradation; glycolysis; pyruvate from D-glyceraldehyde 3-phosphate: step 3/5. Functionally, catalyzes the interconversion of 2-phosphoglycerate and 3-phosphoglycerate. The chain is 2,3-bisphosphoglycerate-independent phosphoglycerate mutase from Saccharophagus degradans (strain 2-40 / ATCC 43961 / DSM 17024).